The following is a 149-amino-acid chain: Calmodulin (149 aa).

An N-acetylthreonine modification is found at threonine 2. 4 EF-hand domains span residues 8-43 (EQIA…LGQN), 44-79 (PTEA…KMKE), 81-116 (DSEE…LGEK), and 117-149 (LTDE…MTSK). Aspartate 21, aspartate 23, aspartate 25, threonine 27, glutamate 32, aspartate 57, aspartate 59, asparagine 61, threonine 63, glutamate 68, aspartate 94, aspartate 96, asparagine 98, and glutamate 105 together coordinate Ca(2+). At lysine 116 the chain carries N6,N6,N6-trimethyllysine. Ca(2+) is bound by residues aspartate 130, aspartate 132, aspartate 134, glutamine 136, and glutamate 141.

The protein belongs to the calmodulin family.

In terms of biological role, calmodulin mediates the control of a large number of enzymes, ion channels and other proteins by Ca(2+). Among the enzymes to be stimulated by the calmodulin-Ca(2+) complex are a number of protein kinases and phosphatases. The sequence is that of Calmodulin from Halichondria okadai (Marine sponge).